A 252-amino-acid polypeptide reads, in one-letter code: 2-succinyl-6-hydroxy-2,4-cyclohexadiene-1-carboxylate synthase (252 aa).

It belongs to the AB hydrolase superfamily. MenH family. Monomer.

It catalyses the reaction 5-enolpyruvoyl-6-hydroxy-2-succinyl-cyclohex-3-ene-1-carboxylate = (1R,6R)-6-hydroxy-2-succinyl-cyclohexa-2,4-diene-1-carboxylate + pyruvate. Its pathway is quinol/quinone metabolism; 1,4-dihydroxy-2-naphthoate biosynthesis; 1,4-dihydroxy-2-naphthoate from chorismate: step 3/7. It participates in quinol/quinone metabolism; menaquinone biosynthesis. In terms of biological role, catalyzes a proton abstraction reaction that results in 2,5-elimination of pyruvate from 2-succinyl-5-enolpyruvyl-6-hydroxy-3-cyclohexene-1-carboxylate (SEPHCHC) and the formation of 2-succinyl-6-hydroxy-2,4-cyclohexadiene-1-carboxylate (SHCHC). This Shigella sonnei (strain Ss046) protein is 2-succinyl-6-hydroxy-2,4-cyclohexadiene-1-carboxylate synthase.